We begin with the raw amino-acid sequence, 81 residues long: Protein RADIALIS-like 3 (81 aa).

The SANT domain occupies 7 to 62 (SSSASWTRKENKLFERALATYDQDTPDRWHNVARAVGGKSAEEVRRHYELLIRDVN).

In terms of tissue distribution, expressed just outside the vascular bundles in the rosette stem and the leaf traces. Not detected in floral primordia.

The protein localises to the nucleus. Its function is as follows. Probable transcription factor. The polypeptide is Protein RADIALIS-like 3 (RL3) (Arabidopsis thaliana (Mouse-ear cress)).